The chain runs to 163 residues: Phosphopantetheine adenylyltransferase (163 aa).

Ser8 contributes to the substrate binding site. ATP contacts are provided by residues 8-9 and His16; that span reads SF. Lys40, Thr72, and Arg86 together coordinate substrate. Residues 87 to 89, Glu97, and 122 to 128 contribute to the ATP site; these read GLR and HSFLSSS.

Belongs to the bacterial CoaD family. As to quaternary structure, homohexamer. Mg(2+) serves as cofactor.

It localises to the cytoplasm. It carries out the reaction (R)-4'-phosphopantetheine + ATP + H(+) = 3'-dephospho-CoA + diphosphate. The protein operates within cofactor biosynthesis; coenzyme A biosynthesis; CoA from (R)-pantothenate: step 4/5. In terms of biological role, reversibly transfers an adenylyl group from ATP to 4'-phosphopantetheine, yielding dephospho-CoA (dPCoA) and pyrophosphate. The polypeptide is Phosphopantetheine adenylyltransferase (Parasynechococcus marenigrum (strain WH8102)).